Consider the following 121-residue polypeptide: Large ribosomal subunit protein bL31 (121 aa).

Residues 1 to 97 (MKEGIHPDYK…AKENRAAKRA (97 aa)) are large ribosomal subunit protein bL31. Residues C16, C18, C36, and C39 each coordinate Zn(2+). Positions 65–80 (ATPAKAEPAKKAPAAE) are enriched in low complexity. Positions 65 to 121 (ATPAKAEPAKKAPAAEPAKKVEAAKENRAAKRAKAGKSKKSEAAPAAEAPAADAKPE) are disordered. Residues 74 to 121 (KKAPAAEPAKKVEAAKENRAAKRAKAGKSKKSEAAPAAEAPAADAKPE) are unknown. Residues 81 to 93 (PAKKVEAAKENRA) are compositionally biased toward basic and acidic residues. The span at 107–121 (AAPAAEAPAADAKPE) shows a compositional bias: low complexity.

Belongs to the bacterial ribosomal protein bL31 family. Type A subfamily. Part of the 50S ribosomal subunit. Requires Zn(2+) as cofactor.

Its function is as follows. Binds the 23S rRNA. This chain is Large ribosomal subunit protein bL31, found in Anaeromyxobacter dehalogenans (strain 2CP-C).